The following is a 1203-amino-acid chain: Protein patched homolog 2 (1203 aa).

Over 1 to 57 (MTRSPPLRELPPSYTPPARTAAPQILAGSLKAPLWLRAYFQGLLFSLGCGIQRHCGK) the chain is Cytoplasmic. Residues 58 to 78 (VLFLGLLAFGALALGLRMAII) form a helical membrane-spanning segment. Over 79–392 (ETNLEQLWVE…LDDILHAFSE (314 aa)) the chain is Extracellular. Asn370 is a glycosylation site (N-linked (GlcNAc...) asparagine). A helical membrane pass occupies residues 393 to 413 (VSAARVVGGYLLMLAYACVTM). An SSD domain is found at 394–552 (SAARVVGGYL…MLVFPAILSL (159 aa)). The Cytoplasmic portion of the chain corresponds to 414-428 (LRWDCAQSQGSVGLA). The helical transmembrane segment at 429 to 449 (GVLLVALAVASGLGLCALLGI) threads the bilayer. The Extracellular segment spans residues 450-457 (TFNAATTQ). The helical transmembrane segment at 458–478 (VLPFLALGIGVDDVFLLAHAF) threads the bilayer. Residues 479 to 501 (TEALPGTPLQERMGECLQRTGTS) are Cytoplasmic-facing. Residues 502–522 (VVLTSINNMAAFLMAALVPIP) form a helical membrane-spanning segment. Topologically, residues 523–531 (ALRAFSLQA) are extracellular. Residues 532 to 552 (AIVVGCTFVAVMLVFPAILSL) traverse the membrane as a helical segment. Topologically, residues 553-686 (DLRRRHCQRL…APLLLQSHAK (134 aa)) are cytoplasmic. The chain crosses the membrane as a helical span at residues 687–707 (AIVLVLFGALLGLSLYGATLV). Topologically, residues 708-963 (QDGLALTDVV…WEQYLGLRRC (256 aa)) are extracellular. Asn812 is a glycosylation site (N-linked (GlcNAc...) asparagine). Residues 964–984 (FLLAVCILLVCTFLVCALLLL) traverse the membrane as a helical segment. At 985-991 (NPWTAGL) the chain is on the cytoplasmic side. A helical transmembrane segment spans residues 992 to 1012 (IVLVLAMMTVELFGIMGFLGI). Residue Lys1013 is a topological domain, extracellular. The chain crosses the membrane as a helical span at residues 1014–1034 (LSAIPVVILVASVGIGVEFTV). Over 1035 to 1064 (HVALGFLTTQGSRNLRAAHALEHTFAPVTD) the chain is Cytoplasmic. A helical transmembrane segment spans residues 1065 to 1085 (GAISTLLGLLMLAGSHFDFIV). Topologically, residues 1086-1093 (RYFFAALT) are extracellular. Residues 1094-1114 (VLTLLGLLHGLVLLPVLLSIL) form a helical membrane-spanning segment. Over 1115–1203 (GPPPEVIQMY…SSRGPGPATG (89 aa)) the chain is Cytoplasmic. Positions 1171–1203 (GAYIHPAPDEPPWSPAATSSGNLSSRGPGPATG) are disordered. Residues 1186–1195 (AATSSGNLSS) show a composition bias toward polar residues.

This sequence belongs to the patched family.

It localises to the membrane. Its function is as follows. Plays a role in the control of cellular growth. May have a role in epidermal development. May act as a receptor for Sonic hedgehog (SHH). The protein is Protein patched homolog 2 (PTCH2) of Homo sapiens (Human).